The sequence spans 490 residues: VALMILRKNLKKPDSIPNIPPGPWKLPIIGSIPHLVGSPPHRKLRDLAKKYGPLMHLQLGEVIFIIVSSAEYAKEVMKTHDVTFASRPRSLFTDIVFYGSTDIGFSPYGDYWRQVRKICNVELLSMKRVQSLWPIREEEVKNLIQRIASEEGSVVNLSQAIDSLIFTITSRSAFGKRYMEQEEFISCVREVMKLAGGFNIADLFPSAKWLENLTRMRSKFEYLHQKMDRILETIIDDHKANSRTKEGQVEGGEEDLIDVLLKYENSSTDQDFHLTIRNIKAILFDIFIAGSETSATTINWTMAEMMKDPILLKKAQDEVREIFQRRGKVDETCIYELKYLKAFINEVLRLHPPGPLVFRECRQACEINGYHIPAKSTVLVNTFAIGTDSKYWAEPERFCPERFIDSSIDYKGTNFEHLPFGAGRRICPGINYGMANVELVLALLLYHFDWTLPKGIKNEDLDLTEEFGVTVSKKEDLCLIPSISHPLPST.

Cys427 contributes to the heme binding site.

The protein belongs to the cytochrome P450 family. Heme serves as cofactor.

The protein is Cytochrome P450 71D11 (CYP71D11) of Lotus japonicus (Lotus corniculatus var. japonicus).